The sequence spans 864 residues: MKRIRHITFLAAFICIIFVIYAIYHSVGQADSSVFAGGEGTKENPYLIETAAHLDNVRNYLGEGYHFQLVQDIDLTAYLDPGGPGWEPIGDNANRFEGHINGNGYRITGFFINRTDGNYIGLFGVIGENGLVRNLSLTGDYITVEGAPALVGALTGNNYGVIDNVSVEIGDGITLSPQSAYVGGLVGTNHGEIWNSNVNSDVNGGNEVGGLVGRNASNNTTRIGIIHNSHATGNVSGQDMVGGLVGNASGKIRYSYATGNVDGLESVGGLIGTSVRIEVDASYATSDVTGESSVGGLIGDVRIDNSRSSVRNSFAIGKVTLPSTGGDVGGLIGTNFSGDVENSYAAGQIEASGASNVGGLIGRQAGGFSSGTVENSFYDEDTTGQSDTGKGTPMSTADMKDRSTFEDAGWDFDWIWGIESDDYPHHDLYFTLTYQADDLDHGDVPSDEIHSRGSVVLVADQGNMSRTGYSFSGWNTALDGSGETYDPYSPVFNSFVMGANDKTLYAQWSINKYDVHFDGNDYDSGQAPLTETILYESEVNVPDQHTLVKDGYTFTGWNTERDGSGDFYEPGDTFRMGTEPVTLYAQWEINVYSVSFESNGGSQVSEVEAEYGTAITEPLPPEKEGHLFKGWYQDELLTEAWDFETSKVSENMILYAKWEINEYTVSFESNGGSQVSEVEAEYGSSITEPVPPEKEGHSFKGWYQDEFLTEAWDFKTDTVSGDMTLYAKWEINVYSVSFESNGGSQVSEVDTEFASLIEEPTPPEKEGHSFKGWYQDKLLTEAWEFETDTVIGDMTLYAKWEINVYTVSFATNGGSKVSEVDAEFASLIAEPTPPEKEGHSFKEWYQDELLTEAWEFERTRLTKI.

The chain crosses the membrane as a helical span at residues 7–27 (ITFLAAFICIIFVIYAIYHSV). The tract at residues 372-399 (TVENSFYDEDTTGQSDTGKGTPMSTADM) is disordered. Polar residues predominate over residues 383-395 (TGQSDTGKGTPMS).

The protein resides in the cell membrane. The chain is Putative Gly-rich membrane protein Bcell_0380 from Evansella cellulosilytica (strain ATCC 21833 / DSM 2522 / FERM P-1141 / JCM 9156 / N-4) (Bacillus cellulosilyticus).